Reading from the N-terminus, the 230-residue chain is uncharacterized protein (230 aa).

A run of 6 helical transmembrane segments spans residues 4–24 (ACIAIIIILLTVAAYLAMVKL), 30–50 (LPFLIPVLTTTILIVAALMMF), 67–87 (LLGPAVVALAYPLYKQWHIIV), 91–111 (VPILGGVLVGLCMGMISGLIF), 148–168 (MTVVFVMIAGFSGVILGPLFL), and 210–230 (MTLCAVLGSFFGPLVVWLFHI).

The protein belongs to the YohK (E.coli)/YwbG (IPA-22R) (B.subtilis) family.

Its subcellular location is the cell membrane. This is an uncharacterized protein from Bacillus subtilis (strain 168).